The following is a 659-amino-acid chain: tRNA-guanine(15) transglycosylase (659 aa).

Catalysis depends on D84, which acts as the Nucleophile. D119 and A190 together coordinate substrate. The Zn(2+) site is built by C273, C275, and C278. Residues 583–658 (KNRVVVNKDS…QAIKTRKGMK (76 aa)) form the PUA domain.

It belongs to the archaeosine tRNA-ribosyltransferase family. Zn(2+) is required as a cofactor.

It carries out the reaction guanosine(15) in tRNA + 7-cyano-7-deazaguanine = 7-cyano-7-carbaguanosine(15) in tRNA + guanine. The protein operates within tRNA modification; archaeosine-tRNA biosynthesis. Functionally, exchanges the guanine residue with 7-cyano-7-deazaguanine (preQ0) at position 15 in the dihydrouridine loop (D-loop) of archaeal tRNAs. The polypeptide is tRNA-guanine(15) transglycosylase (Methanobrevibacter smithii (strain ATCC 35061 / DSM 861 / OCM 144 / PS)).